The chain runs to 540 residues: Light-independent protochlorophyllide reductase subunit B (540 aa).

Asp-36 provides a ligand contact to [4Fe-4S] cluster. Asp-292 serves as the catalytic Proton donor. 428 to 429 (GL) contributes to the substrate binding site. The segment at 451 to 490 (SNVASGVEPSTPSVSSEVSASSSASPEASAPTPSPDGDMV) is disordered. Positions 457 to 481 (VEPSTPSVSSEVSASSSASPEASAP) are enriched in low complexity.

Belongs to the ChlB/BchB/BchZ family. In terms of assembly, protochlorophyllide reductase is composed of three subunits; BchL, BchN and BchB. Forms a heterotetramer of two BchB and two BchN subunits. Requires [4Fe-4S] cluster as cofactor.

The enzyme catalyses chlorophyllide a + oxidized 2[4Fe-4S]-[ferredoxin] + 2 ADP + 2 phosphate = protochlorophyllide a + reduced 2[4Fe-4S]-[ferredoxin] + 2 ATP + 2 H2O. It functions in the pathway porphyrin-containing compound metabolism; bacteriochlorophyll biosynthesis (light-independent). Functionally, component of the dark-operative protochlorophyllide reductase (DPOR) that uses Mg-ATP and reduced ferredoxin to reduce ring D of protochlorophyllide (Pchlide) to form chlorophyllide a (Chlide). This reaction is light-independent. The NB-protein (BchN-BchB) is the catalytic component of the complex. In Chlorobium chlorochromatii (strain CaD3), this protein is Light-independent protochlorophyllide reductase subunit B.